The following is a 577-amino-acid chain: Arginine--tRNA ligase (577 aa).

Residues 122 to 132 (PNVAKEMHVGH) carry the 'HIGH' region motif.

The protein belongs to the class-I aminoacyl-tRNA synthetase family. As to quaternary structure, monomer.

It localises to the cytoplasm. It catalyses the reaction tRNA(Arg) + L-arginine + ATP = L-arginyl-tRNA(Arg) + AMP + diphosphate. This chain is Arginine--tRNA ligase, found in Aliivibrio fischeri (strain MJ11) (Vibrio fischeri).